We begin with the raw amino-acid sequence, 92 residues long: Bombyxin A-5 (92 aa).

The N-terminal stretch at 1-19 is a signal peptide; it reads MKLLLAIALMLTTVMWAST. Gln20 carries the post-translational modification Pyrrolidone carboxylic acid. Intrachain disulfides connect Cys29–Cys79, Cys41–Cys92, and Cys78–Cys83. Residues 50–71 constitute a propeptide, c peptide like; that stretch reads SDAQFASYGSAWLMPYSEGRDQ.

Belongs to the insulin family. In terms of assembly, heterodimer of a B chain and an A chain linked by two disulfide bonds.

The protein localises to the secreted. Functionally, brain peptide responsible for activation of prothoracic glands to produce ecdysone in insects. This Bombyx mori (Silk moth) protein is Bombyxin A-5 (BBXA5).